Reading from the N-terminus, the 380-residue chain is Cyclohex-1-ene-1-carbonyl-CoA dehydrogenase (380 aa).

Aspartate 91 acts as the Proton acceptor in catalysis. FAD is bound by residues leucine 122, alanine 124, threonine 125, serine 131, and threonine 157. Serine 131 is a cyclohex-1-ene-1-carbonyl-CoA binding site. Cyclohexa-1,5-diene-1-carbonyl-CoA is bound at residue serine 131. The cyclohex-1-ene-1-carbonyl-CoA site is built by lysine 178, arginine 242, and threonine 363. 3 residues coordinate cyclohexa-1,5-diene-1-carbonyl-CoA: lysine 178, arginine 242, and threonine 363. Residues threonine 365 and glutamine 367 each coordinate FAD. Arginine 375 is a binding site for cyclohex-1-ene-1-carbonyl-CoA. Position 375 (arginine 375) interacts with cyclohexa-1,5-diene-1-carbonyl-CoA.

It belongs to the acyl-CoA dehydrogenase family. As to quaternary structure, homotetramer. The cofactor is FAD.

The catalysed reaction is cyclohex-1-ene-1-carbonyl-CoA + oxidized [electron-transfer flavoprotein] + H(+) = cyclohexa-1,5-diene-1-carbonyl-CoA + reduced [electron-transfer flavoprotein]. Functionally, acyl-CoA dehydrogenase involved in the anaerobic degradation of cyclohexane carboxylic acid (CHC). Catalyzes the 1,4-dehydrogenation at C3 and C6 of cyclohex-1-ene-1-carbonyl-CoA (CHeneCoA or Ch1CoA) to cyclohexa-1,5-diene-1-carbonyl-CoA (CHdieneCoA or Ch1,5CoA). Also able to catalyze, at a lower rate, the dehydrogenation at C3 and C4 of CHdieneCoA to benzoyl-CoA. The chain is Cyclohex-1-ene-1-carbonyl-CoA dehydrogenase from Geobacter metallireducens (strain ATCC 53774 / DSM 7210 / GS-15).